Here is a 261-residue protein sequence, read N- to C-terminus: 14-3-3 protein 8 (261 aa).

The tract at residues Asp-237 to Glu-261 is disordered.

It belongs to the 14-3-3 family. As to quaternary structure, homodimer.

The chain is 14-3-3 protein 8 (TFT8) from Solanum lycopersicum (Tomato).